Consider the following 161-residue polypeptide: Thy-1 membrane glycoprotein (161 aa).

A signal peptide spans 1–19 (MNLAISIALLLTVLQVSRG). Gln20 carries the post-translational modification Pyrrolidone carboxylic acid. The 107-residue stretch at 20-126 (QKVTSLTACL…SQNVTVLRDK (107 aa)) folds into the Ig-like V-type domain. Cystine bridges form between Cys28–Cys130 and Cys38–Cys104. Residues Asn42 and Asn79 are each glycosylated (N-linked (GlcNAc...) asparagine). The residue at position 82 (Ser82) is a Phosphoserine. Residue Asn119 is glycosylated (N-linked (GlcNAc...) asparagine). The GPI-anchor amidated cysteine; alternate moiety is linked to residue Cys130. Positions 131-161 (EGISLLAQNTSWLXLLLLSLSLLQATDFMSL) are cleaved as a propeptide — removed in mature form. A glycan (N-linked (GlcNAc...) asparagine) is linked at Asn139.

The protein localises to the cell membrane. Functionally, may play a role in cell-cell or cell-ligand interactions during synaptogenesis and other events in the brain. The sequence is that of Thy-1 membrane glycoprotein (THY1) from Macaca mulatta (Rhesus macaque).